Reading from the N-terminus, the 196-residue chain is Large ribosomal subunit protein bL25 (196 aa).

The protein belongs to the bacterial ribosomal protein bL25 family. CTC subfamily. As to quaternary structure, part of the 50S ribosomal subunit; part of the 5S rRNA/L5/L18/L25 subcomplex. Contacts the 5S rRNA. Binds to the 5S rRNA independently of L5 and L18.

In terms of biological role, this is one of the proteins that binds to the 5S RNA in the ribosome where it forms part of the central protuberance. The sequence is that of Large ribosomal subunit protein bL25 from Bacteroides thetaiotaomicron (strain ATCC 29148 / DSM 2079 / JCM 5827 / CCUG 10774 / NCTC 10582 / VPI-5482 / E50).